The chain runs to 241 residues: Uridylate kinase (241 aa).

Position 15–18 (Lys-15–Gly-18) interacts with ATP. Residues Gly-23–Gly-28 form an involved in allosteric activation by GTP region. Residue Gly-57 participates in UMP binding. Gly-58 and Arg-62 together coordinate ATP. Residues Asp-77 and Thr-138–Thr-145 each bind UMP. Thr-165, Tyr-171, and Asp-174 together coordinate ATP.

This sequence belongs to the UMP kinase family. In terms of assembly, homohexamer.

It is found in the cytoplasm. The catalysed reaction is UMP + ATP = UDP + ADP. The protein operates within pyrimidine metabolism; CTP biosynthesis via de novo pathway; UDP from UMP (UMPK route): step 1/1. Its activity is regulated as follows. Allosterically activated by GTP. Inhibited by UTP. In terms of biological role, catalyzes the reversible phosphorylation of UMP to UDP. The chain is Uridylate kinase from Serratia proteamaculans (strain 568).